Consider the following 138-residue polypeptide: Translation initiation factor 5A (138 aa).

Position 37 is a hypusine (lysine 37).

The protein belongs to the eIF-5A family.

It localises to the cytoplasm. In terms of biological role, functions by promoting the formation of the first peptide bond. The protein is Translation initiation factor 5A (eIF5A) of Thermococcus sibiricus (strain DSM 12597 / MM 739).